The following is a 273-amino-acid chain: Formamidopyrimidine-DNA glycosylase (273 aa).

P2 (schiff-base intermediate with DNA) is an active-site residue. E3 functions as the Proton donor in the catalytic mechanism. The active-site Proton donor; for beta-elimination activity is the K58. H91 and R110 together coordinate DNA. The segment at 238–272 (QVYGKTGQPCPRCASMIVKIKLGGRGTHLCPHCQK) adopts an FPG-type zinc-finger fold. The Proton donor; for delta-elimination activity role is filled by R262.

The protein belongs to the FPG family. In terms of assembly, monomer. Zn(2+) serves as cofactor.

The catalysed reaction is Hydrolysis of DNA containing ring-opened 7-methylguanine residues, releasing 2,6-diamino-4-hydroxy-5-(N-methyl)formamidopyrimidine.. The enzyme catalyses 2'-deoxyribonucleotide-(2'-deoxyribose 5'-phosphate)-2'-deoxyribonucleotide-DNA = a 3'-end 2'-deoxyribonucleotide-(2,3-dehydro-2,3-deoxyribose 5'-phosphate)-DNA + a 5'-end 5'-phospho-2'-deoxyribonucleoside-DNA + H(+). Its function is as follows. Involved in base excision repair of DNA damaged by oxidation or by mutagenic agents. Acts as a DNA glycosylase that recognizes and removes damaged bases. Has a preference for oxidized purines, such as 7,8-dihydro-8-oxoguanine (8-oxoG). Has AP (apurinic/apyrimidinic) lyase activity and introduces nicks in the DNA strand. Cleaves the DNA backbone by beta-delta elimination to generate a single-strand break at the site of the removed base with both 3'- and 5'-phosphates. This Streptococcus thermophilus (strain ATCC BAA-250 / LMG 18311) protein is Formamidopyrimidine-DNA glycosylase.